We begin with the raw amino-acid sequence, 199 residues long: MIAYIEGKLAHKDPTFVVVDVQGIGYHIRVSLHTFSQLKDLERVKIHTFLHIKEDAHTLFGFADLMEKEMFLHLTSISGIGPGTALVVLSSMNPIELKEAIAREDVKTIQSVKGIGLKTAQRVILELKDKMKKDALLAGSDSKQNFSVSHNSIRSEALTALITLGFTKTVAEKNLDLILKGNSNSFTLEDLIKQALKMS.

Residues 1 to 63 form a domain I region; sequence MIAYIEGKLA…EDAHTLFGFA (63 aa). The domain II stretch occupies residues 64-142; it reads DLMEKEMFLH…KDALLAGSDS (79 aa). The interval 143-151 is flexible linker; the sequence is KQNFSVSHN. Positions 151-199 are domain III; the sequence is NSIRSEALTALITLGFTKTVAEKNLDLILKGNSNSFTLEDLIKQALKMS.

This sequence belongs to the RuvA family. As to quaternary structure, homotetramer. Forms an RuvA(8)-RuvB(12)-Holliday junction (HJ) complex. HJ DNA is sandwiched between 2 RuvA tetramers; dsDNA enters through RuvA and exits via RuvB. An RuvB hexamer assembles on each DNA strand where it exits the tetramer. Each RuvB hexamer is contacted by two RuvA subunits (via domain III) on 2 adjacent RuvB subunits; this complex drives branch migration. In the full resolvosome a probable DNA-RuvA(4)-RuvB(12)-RuvC(2) complex forms which resolves the HJ.

The protein resides in the cytoplasm. In terms of biological role, the RuvA-RuvB-RuvC complex processes Holliday junction (HJ) DNA during genetic recombination and DNA repair, while the RuvA-RuvB complex plays an important role in the rescue of blocked DNA replication forks via replication fork reversal (RFR). RuvA specifically binds to HJ cruciform DNA, conferring on it an open structure. The RuvB hexamer acts as an ATP-dependent pump, pulling dsDNA into and through the RuvAB complex. HJ branch migration allows RuvC to scan DNA until it finds its consensus sequence, where it cleaves and resolves the cruciform DNA. This chain is Holliday junction branch migration complex subunit RuvA, found in Cytophaga hutchinsonii (strain ATCC 33406 / DSM 1761 / CIP 103989 / NBRC 15051 / NCIMB 9469 / D465).